We begin with the raw amino-acid sequence, 80 residues long: Translation initiation factor IF-1 (80 aa).

Residues 6–80 (EKKKKDESDS…TSRGRIVYRR (75 aa)) form the S1-like domain.

It belongs to the IF-1 family. In terms of assembly, component of the 30S ribosomal translation pre-initiation complex which assembles on the 30S ribosome in the order IF-2 and IF-3, IF-1 and N-formylmethionyl-tRNA(fMet); mRNA recruitment can occur at any time during PIC assembly.

The protein resides in the cytoplasm. Its function is as follows. One of the essential components for the initiation of protein synthesis. Stabilizes the binding of IF-2 and IF-3 on the 30S subunit to which N-formylmethionyl-tRNA(fMet) subsequently binds. Helps modulate mRNA selection, yielding the 30S pre-initiation complex (PIC). Upon addition of the 50S ribosomal subunit IF-1, IF-2 and IF-3 are released leaving the mature 70S translation initiation complex. The protein is Translation initiation factor IF-1 of Deinococcus radiodurans (strain ATCC 13939 / DSM 20539 / JCM 16871 / CCUG 27074 / LMG 4051 / NBRC 15346 / NCIMB 9279 / VKM B-1422 / R1).